A 99-amino-acid chain; its full sequence is Aspartyl/glutamyl-tRNA(Asn/Gln) amidotransferase subunit C (99 aa).

Belongs to the GatC family. As to quaternary structure, heterotrimer of A, B and C subunits.

It carries out the reaction L-glutamyl-tRNA(Gln) + L-glutamine + ATP + H2O = L-glutaminyl-tRNA(Gln) + L-glutamate + ADP + phosphate + H(+). It catalyses the reaction L-aspartyl-tRNA(Asn) + L-glutamine + ATP + H2O = L-asparaginyl-tRNA(Asn) + L-glutamate + ADP + phosphate + 2 H(+). In terms of biological role, allows the formation of correctly charged Asn-tRNA(Asn) or Gln-tRNA(Gln) through the transamidation of misacylated Asp-tRNA(Asn) or Glu-tRNA(Gln) in organisms which lack either or both of asparaginyl-tRNA or glutaminyl-tRNA synthetases. The reaction takes place in the presence of glutamine and ATP through an activated phospho-Asp-tRNA(Asn) or phospho-Glu-tRNA(Gln). This chain is Aspartyl/glutamyl-tRNA(Asn/Gln) amidotransferase subunit C, found in Rhodococcus opacus (strain B4).